A 178-amino-acid chain; its full sequence is Interleukin-10 (178 aa).

The signal sequence occupies residues 1–18 (MHSSALLCYLVFLAGVGA). Intrachain disulfides connect cysteine 30-cysteine 126 and cysteine 80-cysteine 132. The N-linked (GlcNAc...) asparagine glycan is linked to asparagine 67. N-linked (GlcNAc...) asparagine glycosylation is present at asparagine 134.

This sequence belongs to the IL-10 family. Homodimer. Interacts with IL10RA and IL10RB.

Its subcellular location is the secreted. Functionally, major immune regulatory cytokine that acts on many cells of the immune system where it has profound anti-inflammatory functions, limiting excessive tissue disruption caused by inflammation. Mechanistically, IL10 binds to its heterotetrameric receptor comprising IL10RA and IL10RB leading to JAK1 and STAT2-mediated phosphorylation of STAT3. In turn, STAT3 translocates to the nucleus where it drives expression of anti-inflammatory mediators. Targets antigen-presenting cells (APCs) such as macrophages and monocytes and inhibits their release of pro-inflammatory cytokines including granulocyte-macrophage colony-stimulating factor /GM-CSF, granulocyte colony-stimulating factor/G-CSF, IL-1 alpha, IL-1 beta, IL-6, IL-8 and TNF-alpha. Also interferes with antigen presentation by reducing the expression of MHC-class II and co-stimulatory molecules, thereby inhibiting their ability to induce T cell activation. In addition, controls the inflammatory response of macrophages by reprogramming essential metabolic pathways including mTOR signaling. The sequence is that of Interleukin-10 (IL10) from Equus caballus (Horse).